Here is a 602-residue protein sequence, read N- to C-terminus: uncharacterized protein (602 aa).

It belongs to the IIV-6 098R family.

This is an uncharacterized protein from Acheta domesticus (House cricket).